Consider the following 32-residue polypeptide: Apolipophorin-3 (32 aa).

Positions 1–32 (DAPSTTPPQDXEKKAAEFQKTFTEQXNQLANK) are disordered. The span at 20–32 (KTFTEQXNQLANK) shows a compositional bias: polar residues.

This sequence belongs to the insect apolipophorin-3 family. Equilibrium between a soluble monomer and a bound lipoprotein form. Apolipophorin-3 associates with lipophorin during lipid loading until each particle contains 9 or 14 molecules of apolipophorin-3. As to expression, hemolymph.

The protein resides in the secreted. Functionally, assists in the loading of diacylglycerol, generated from triacylglycerol stores in the fat body through the action of adipokinetic hormone, into lipophorin, the hemolymph lipoprotein. It increases the lipid carrying capacity of lipophorin by covering the expanding hydrophobic surface resulting from diacylglycerol uptake. It thus plays a critical role in the transport of lipids during flight in several species of insects. This chain is Apolipophorin-3, found in Diatraea grandiosella (Southwestern corn borer).